The following is a 79-amino-acid chain: Small ribosomal subunit protein uS17 (79 aa).

It belongs to the universal ribosomal protein uS17 family. Part of the 30S ribosomal subunit.

Its function is as follows. One of the primary rRNA binding proteins, it binds specifically to the 5'-end of 16S ribosomal RNA. This is Small ribosomal subunit protein uS17 from Caulobacter sp. (strain K31).